We begin with the raw amino-acid sequence, 286 residues long: NAD kinase (286 aa).

Asp74 serves as the catalytic Proton acceptor. NAD(+) is bound by residues 74-75 (DG), 148-149 (ND), Asp178, Ala186, 189-194 (TAYNLS), and Gln244.

It belongs to the NAD kinase family. Requires a divalent metal cation as cofactor.

The protein resides in the cytoplasm. It carries out the reaction NAD(+) + ATP = ADP + NADP(+) + H(+). In terms of biological role, involved in the regulation of the intracellular balance of NAD and NADP, and is a key enzyme in the biosynthesis of NADP. Catalyzes specifically the phosphorylation on 2'-hydroxyl of the adenosine moiety of NAD to yield NADP. This chain is NAD kinase, found in Campylobacter jejuni subsp. jejuni serotype O:2 (strain ATCC 700819 / NCTC 11168).